A 173-amino-acid chain; its full sequence is Peptide deformylase (173 aa).

Residues cysteine 91 and histidine 133 each contribute to the Fe cation site. Glutamate 134 is a catalytic residue. Histidine 137 contributes to the Fe cation binding site.

This sequence belongs to the polypeptide deformylase family. The cofactor is Fe(2+).

The enzyme catalyses N-terminal N-formyl-L-methionyl-[peptide] + H2O = N-terminal L-methionyl-[peptide] + formate. Functionally, removes the formyl group from the N-terminal Met of newly synthesized proteins. Requires at least a dipeptide for an efficient rate of reaction. N-terminal L-methionine is a prerequisite for activity but the enzyme has broad specificity at other positions. In Buchnera aphidicola subsp. Acyrthosiphon pisum (strain 5A), this protein is Peptide deformylase.